The primary structure comprises 105 residues: Replication restart protein PriB (105 aa).

The region spanning 1–102 (MTTNRLVLSG…LHAEQIELID (102 aa)) is the SSB domain.

The protein belongs to the PriB family. As to quaternary structure, homodimer. Interacts with PriA and DnaT. Component of the replication restart primosome. Primosome assembly occurs via a 'hand-off' mechanism. PriA binds to replication forks, subsequently PriB then DnaT bind; DnaT then displaces ssDNA to generate the helicase loading substrate.

Its function is as follows. Involved in the restart of stalled replication forks, which reloads the replicative helicase on sites other than the origin of replication; the PriA-PriB pathway is the major replication restart pathway. During primosome assembly it facilitates complex formation between PriA and DnaT on DNA; stabilizes PriA on DNA. Stimulates the DNA unwinding activity of PriA helicase. The sequence is that of Replication restart protein PriB from Photorhabdus laumondii subsp. laumondii (strain DSM 15139 / CIP 105565 / TT01) (Photorhabdus luminescens subsp. laumondii).